Consider the following 395-residue polypeptide: Putative pyridoxal phosphate-dependent acyltransferase (395 aa).

A pyridoxal 5'-phosphate-binding site is contributed by 110–111 (GF). His-135 serves as a coordination point for substrate. Residues Ser-185, 210-213 (DDAH), and 240-243 (TLSK) each bind pyridoxal 5'-phosphate. Lys-243 is modified (N6-(pyridoxal phosphate)lysine). Thr-357 contributes to the substrate binding site.

It belongs to the class-II pyridoxal-phosphate-dependent aminotransferase family. Homodimer. Pyridoxal 5'-phosphate serves as cofactor.

This is Putative pyridoxal phosphate-dependent acyltransferase from Staphylococcus aureus (strain Mu50 / ATCC 700699).